Consider the following 1259-residue polypeptide: Telomerase reverse transcriptase (1259 aa).

The region spanning 742-1067 (RGEPRKAVRH…SFMPWSGLLI (326 aa)) is the Reverse transcriptase domain. The Mg(2+) site is built by D837, D999, and D1000.

The protein belongs to the reverse transcriptase family. Telomerase subfamily. In terms of assembly, component of the telomerase ribonucleoprotein complex. In terms of tissue distribution, expressed in shoot apices and immature embryos.

It is found in the nucleus. Its subcellular location is the chromosome. The protein resides in the telomere. The enzyme catalyses DNA(n) + a 2'-deoxyribonucleoside 5'-triphosphate = DNA(n+1) + diphosphate. In terms of biological role, telomerase is a ribonucleoprotein enzyme essential for the replication of chromosome termini in most eukaryotes. It elongates telomeres. It is a reverse transcriptase that adds simple sequence repeats to chromosome ends by copying a template sequence within the RNA component of the enzyme. This is Telomerase reverse transcriptase (TERT) from Oryza sativa subsp. japonica (Rice).